The following is a 91-amino-acid chain: Salivary lectin pathway inhibitor (91 aa).

Residues 1–21 form the signal peptide; it reads MGLTETTLVLVSLAFFASAVA. Asn26 and Asn87 each carry an N-linked (GlcNAc...) asparagine glycan.

The protein belongs to the salp14 family. In terms of processing, glycosylated; deglycosylation largely abrogates the complement inhibitory effect. In terms of tissue distribution, nymph salivary gland (at protein level). Saliva (at protein level). Not detected in midgut.

The protein resides in the secreted. Inhibits the lectin pathway of complement system activation in the host by reducing binding of mannose-binding lectin and L-ficolin to their ligands. Does not affect the classical and alternative pathways of complement system activation in the host. Its function is as follows. (Microbial infection) Protects Borrelia garinii (strain A87S) from host complement-mediated killing by preventing deposition of host C5b-9 membrane attack complexes on the surface of spirochetes. Inhibits phagocytosis of B.garinii (strain A87S) by human neutrophils. Impairs Borrelia-induced complement-mediated chemotaxis of human polymorphonuclear leukocytes. In terms of biological role, (Microbial infection) Protects Borrelia burgdorferi (strain N40), which is resistant to normal human serum, from Borrelia-opsonizing antibody-mediated complement-dependent killing. The sequence is that of Salivary lectin pathway inhibitor from Ixodes scapularis (Black-legged tick).